Consider the following 108-residue polypeptide: MPRESSPDSHHEHGVAVEPARPEVAPPPFYQVMLLNDDYTPMDFVVDVLQQFFTMDLDKATQVMLHVHTRGRGVCGVFTREVAETKVAQVNEYSRMNQHPLLCTMEKA.

Over residues 1-15 (MPRESSPDSHHEHGV) the composition is skewed to basic and acidic residues. Positions 1–24 (MPRESSPDSHHEHGVAVEPARPEV) are disordered.

The protein belongs to the ClpS family. As to quaternary structure, binds to the N-terminal domain of the chaperone ClpA.

Involved in the modulation of the specificity of the ClpAP-mediated ATP-dependent protein degradation. The sequence is that of ATP-dependent Clp protease adapter protein ClpS from Stenotrophomonas maltophilia (strain R551-3).